The sequence spans 429 residues: Cytochrome bc1 complex Rieske iron-sulfur subunit (429 aa).

Positions 1–45 (MSRADDDAVGVPPTCGGRSDEEERRIVPGPNPQDGAKDGAKATAV) are disordered. 3 helical membrane-spanning segments follow: residues 96–116 (VAVW…IFLF), 137–157 (PLYG…AVLY), and 207–227 (FGVG…GGLI). The Rieske domain maps to 316 to 410 (RNPVMLIRIK…ITIDTDGYLV (95 aa)). [2Fe-2S] cluster-binding residues include Cys-353, His-355, Cys-372, and His-375. A disulfide bond links Cys-358 and Cys-374.

It belongs to the Rieske iron-sulfur protein family. The cytochrome bc1 complex is composed of a cytochrome b (QcrB), the Rieske iron-sulfur protein (QcrA) and a diheme cytochrome c (QcrC) subunit. It depends on [2Fe-2S] cluster as a cofactor.

Its subcellular location is the cell membrane. Its function is as follows. Iron-sulfur subunit of the cytochrome bc1 complex, an essential component of the respiratory electron transport chain required for ATP synthesis. The bc1 complex catalyzes the oxidation of menaquinol and the reduction of cytochrome c in the respiratory chain. The bc1 complex operates through a Q-cycle mechanism that couples electron transfer to generation of the proton gradient that drives ATP synthesis. In Mycobacterium tuberculosis (strain CDC 1551 / Oshkosh), this protein is Cytochrome bc1 complex Rieske iron-sulfur subunit (qcrA).